The sequence spans 1072 residues: E3 ubiquitin-protein ligase RNF31 (1072 aa).

Residues 1-485 (MPGEEEERAF…PEKQRQDKMR (485 aa)) are polyubiquitin-binding. The PUB domain maps to 71–142 (TLSTALNILE…SFPEGQEEPD (72 aa)). The interval 263 to 290 (QGTHLSPSLPASAQPRPQSTSLLALGDS) is disordered. Positions 265-280 (THLSPSLPASAQPRPQ) are enriched in polar residues. The segment covering 281-290 (STSLLALGDS) has biased composition (low complexity). 2 consecutive RanBP2-type zinc fingers follow at residues 299–329 (SAHL…PRGC) and 350–379 (ARGR…PRLA). Phosphoserine is present on Ser383. The RanBP2-type 3 zinc-finger motif lies at 409-438 (QSQVWYCIHCTFCNSSPGWVCVMCNRTSSP). A disordered region spans residues 443-484 (HAPRPYASSLEKGPPKPGPPRRLSAPLPSSCGDPEKQRQDKM). Positions 463-472 (RRLSAPLPSS) are enriched in low complexity. Ser466 carries the post-translational modification Phosphoserine. Positions 475–484 (DPEKQRQDKM) are enriched in basic and acidic residues. The segment at 563–616 (GNLDEAVEECVRTRRRKVQELQSLGFGPEEGSLQALFQHGGDVSRALTELQRQR) is interaction with RBCK1. Residues 564 to 615 (NLDEAVEECVRTRRRKVQELQSLGFGPEEGSLQALFQHGGDVSRALTELQRQ) enclose the UBA domain. The TRIAD supradomain stretch occupies residues 695-929 (LAQECAVCGW…KSLHGHHPRD (235 aa)). Residues Cys699, Cys702, Cys717, Cys719, Cys722, and Cys725 each contribute to the Zn(2+) site. The RING-type 1 zinc finger occupies 699-749 (CAVCGWALPHNRMQALTSCECTICPDCFRQHFTIALKEKHITDMVCPACGR). A (Microbial infection) Glycyl lysine isopeptide (Lys-Gly) (interchain with G-Cter in ubiquitin) cross-link involves residue Lys735. 2 residues coordinate Zn(2+): Cys744 and Cys747. An IBR-type zinc finger spans residues 779-841 (ALFHKKLTEG…WEEQHRGRSC (63 aa)). Residue Lys783 forms a (Microbial infection) Glycyl lysine isopeptide (Lys-Gly) (interchain with G-Cter in ubiquitin) linkage. 10 residues coordinate Zn(2+): Cys799, Cys802, Cys817, Cys820, Cys825, Cys828, His836, Cys841, Cys871, and Cys874. The segment at 871 to 901 (CPKCKFSYALARGGCMHFHCTQCRHQFCSGC) adopts an RING-type 2; atypical zinc-finger fold. Lys875 participates in a covalent cross-link: (Microbial infection) Glycyl lysine isopeptide (Lys-Gly) (interchain with G-Cter in ubiquitin). Residue Cys885 is part of the active site. 6 residues coordinate Zn(2+): Cys890, Cys893, Cys898, Cys901, Cys916, and His925. The LDD domain stretch occupies residues 910 to 1072 (KCPEPNCRVK…LGQSIPRRRK (163 aa)).

The protein belongs to the RBR family. Component of the LUBAC complex (linear ubiquitin chain assembly complex) which consists of SHARPIN, RBCK1 and RNF31. LUBAC has a MW of approximately 600 kDa suggesting a heteromultimeric assembly of its subunits. Associates with the TNF-R1 signaling complex (TNF-RSC) in a stimulation-dependent manner. Interacts (via the PUB domain) with OTULIN (via the PIM motif); the interaction is direct. Interacts (via the PUB domain) with VCP (via the PIM motif). Interacts (via the PUB domain) with SPATA2 (via the PIM motif); interaction is direct and bridges RNF31 and CYLD. Interacts with CYLD; the interaction is indirect and is mediated via SPATA2. Interacts with MUSK. Interacts with CARD11, promoting linear ubiquitination of BCL10. In terms of assembly, (Microbial infection) Interacts with S.flexneri E3 ubiquitin-protein ligases IpaH1.4 and IpaH2.5, leading to its ubiquitination. In terms of processing, autoubiquitinated. Interaction with OTULIN is required to suppress formation of 'Met-1'-linked polyubiquitin chains and prevent subsequent inactivation of the LUBAC complex. Post-translationally, cleaved by caspase during apoptosis. (Microbial infection) Ubiquitinated by S.flexneri E3 ubiquitin-protein ligases IpaH1.4 and IpaH2.5, leading to its degradation by the proteasome, thereby preventing formation of the bacterial ubiquitin coat and activation of innate immunity. Expressed in both normal and transformed breast epithelial cell lines.

It localises to the cytoplasm. The catalysed reaction is [E2 ubiquitin-conjugating enzyme]-S-ubiquitinyl-L-cysteine + [acceptor protein]-L-lysine = [E2 ubiquitin-conjugating enzyme]-L-cysteine + [acceptor protein]-N(6)-ubiquitinyl-L-lysine.. It participates in protein modification; protein ubiquitination. In terms of biological role, E3 ubiquitin-protein ligase component of the LUBAC complex which conjugates linear ('Met-1'-linked) polyubiquitin chains to substrates and plays a key role in NF-kappa-B activation and regulation of inflammation. LUBAC conjugates linear polyubiquitin to IKBKG and RIPK1 and is involved in activation of the canonical NF-kappa-B and the JNK signaling pathways. Linear ubiquitination mediated by the LUBAC complex interferes with TNF-induced cell death and thereby prevents inflammation. LUBAC is recruited to the TNF-R1 signaling complex (TNF-RSC) following polyubiquitination of TNF-RSC components by BIRC2 and/or BIRC3 and to conjugate linear polyubiquitin to IKBKG and possibly other components contributing to the stability of the complex. The LUBAC complex is also involved in innate immunity by conjugating linear polyubiquitin chains at the surface of bacteria invading the cytosol to form the ubiquitin coat surrounding bacteria. LUBAC is not able to initiate formation of the bacterial ubiquitin coat, and can only promote formation of linear polyubiquitins on pre-existing ubiquitin. Recruited to the surface of bacteria by RNF213, which initiates the bacterial ubiquitin coat. The bacterial ubiquitin coat acts as an 'eat-me' signal for xenophagy and promotes NF-kappa-B activation. Together with OTULIN, the LUBAC complex regulates the canonical Wnt signaling during angiogenesis. RNF31 is required for linear ubiquitination of BCL10, thereby promoting TCR-induced NF-kappa-B activation. Binds polyubiquitin of different linkage types. In Homo sapiens (Human), this protein is E3 ubiquitin-protein ligase RNF31.